The sequence spans 699 residues: Elongation factor G (699 aa).

The tr-type G domain maps to 8–290; sequence ERYRNIGIMA…AVLDYLPSPV (283 aa). Residues 17-24, 88-92, and 142-145 each bind GTP; these read AHIDAGKT, DTPGH, and NKMD.

It belongs to the TRAFAC class translation factor GTPase superfamily. Classic translation factor GTPase family. EF-G/EF-2 subfamily.

It is found in the cytoplasm. Its function is as follows. Catalyzes the GTP-dependent ribosomal translocation step during translation elongation. During this step, the ribosome changes from the pre-translocational (PRE) to the post-translocational (POST) state as the newly formed A-site-bound peptidyl-tRNA and P-site-bound deacylated tRNA move to the P and E sites, respectively. Catalyzes the coordinated movement of the two tRNA molecules, the mRNA and conformational changes in the ribosome. This chain is Elongation factor G, found in Acidithiobacillus ferrooxidans (strain ATCC 23270 / DSM 14882 / CIP 104768 / NCIMB 8455) (Ferrobacillus ferrooxidans (strain ATCC 23270)).